We begin with the raw amino-acid sequence, 101 residues long: MIPGELIPAEGTIELNAGRPTVTLTVANTGDRPIQVGSHYHFYEVNPALQFEREQARGMRLDIPAGTAIRFEPGDERVVQLVALGGTRQIYGFRGEVNGAL.

This sequence belongs to the urease beta subunit family. As to quaternary structure, heterotrimer of UreA (gamma), UreB (beta) and UreC (alpha) subunits. Three heterotrimers associate to form the active enzyme.

The protein resides in the cytoplasm. The enzyme catalyses urea + 2 H2O + H(+) = hydrogencarbonate + 2 NH4(+). Its pathway is nitrogen metabolism; urea degradation; CO(2) and NH(3) from urea (urease route): step 1/1. The protein is Urease subunit beta of Thermosynechococcus vestitus (strain NIES-2133 / IAM M-273 / BP-1).